Consider the following 732-residue polypeptide: MNRGYDSYNRSRSTSSRPLDREPYHAVSELYTKEITHTPIGPASDLPPEILDILKENPRATPQYTPPLIRHRENTWTPENYPIVRVPSAQFTDVMTELYDYHEVEKYTHRSVTPDYEPLRKEPELKEQKLPTYQVIPPTPEKNTPRHQHHSGITLSPSDSSRTLGALPKKPPMYEEYLQMQKKDENRNIPRQVSSADSQRTIRNNNELSHLRHIDSSSSSEASEPAKDLDDRERYVYTHDVYVDSTTGRPFTPGREDVREKKNCDKLKINVYFKPPHPPVEITYKLDEIEIEKNENIVVTKLRPSRSDTILSRSVSTSPSSVTDNIPKTSTSRIPSSENPKTMEHTTTSRRFPTQTSILRKEHEIVQVPLHRSQSLRQSRISEHSKRSLGKTTSTVSTERPIPIHVVEETSSIDMDVVFPKMPHHQTVTNVRVPSSRGSAISRAHSEHRRSIDRSEPRHHHRHHVHSETPELPYTRGISKTPSVREYNVKREGQRSPSRSHRSERSPSEVRIPVTTTHTRPIAKRQSPEELDYGRFADKSQQNRFPGDHQAREEDLPYTRGISKTPSNQDSRSERTPCSDIHIPYNNPEKERAYQQSERSSYRSHKSVTPSEKSLPRNSETPELHYTRGISKTPSDRVEKSRYLSRGVSTPHTPSEVHIPYNNPEKERAYQQSHRPSSPKRRPSGRTNSPNKSSSSSKARPSAAPLEEIVHIKERYERDETIRRFFPTTTAV.

6 disordered regions span residues 1 to 24 (MNRG…REPY), 115 to 169 (DYEP…ALPK), 181 to 232 (QKKD…LDDR), 310 to 351 (ILSR…TSRR), 372 to 397 (RSQS…STVS), and 426 to 708 (QTVT…PLEE). The span at 8-17 (YNRSRSTSSR) shows a compositional bias: polar residues. A compositionally biased stretch (basic and acidic residues) spans 117–129 (EPLRKEPELKEQK). Polar residues-rich tracts occupy residues 151-163 (SGIT…SSRT) and 189-208 (IPRQ…NNEL). The span at 312–323 (SRSVSTSPSSVT) shows a compositional bias: low complexity. Positions 324-351 (DNIPKTSTSRIPSSENPKTMEHTTTSRR) are enriched in polar residues. A compositionally biased stretch (polar residues) spans 426–439 (QTVTNVRVPSSRGS). 2 stretches are compositionally biased toward basic and acidic residues: residues 526–538 (QSPE…RFAD) and 546–557 (PGDHQAREEDLP). The span at 607 to 619 (SVTPSEKSLPRNS) shows a compositional bias: polar residues. The span at 688-705 (NSPNKSSSSSKARPSAAP) shows a compositional bias: low complexity.

Interacts with tax-6. As to expression, expressed in intestine.

The sequence is that of Calcineurin-interacting protein 2 from Caenorhabditis elegans.